Consider the following 212-residue polypeptide: MHILVTGFAPFDNQDINPSWEAVTQLEDIIGTHTIDKLKLPTSFKKVDTMINKALASNHYDIVLSIGQAGGRSAITPERVAINIDDARIPDNDDFQPIDQAIHLDGAPAYFSNLPVKAMTQSIINQGLPGALSNSAGTFVCNHVLYHLGYLQDKHYPLLRFGFIHVPYIPEQIDGKSDTPSMTLENIVTGLTAAIEAISDDDDLRIALGTTE.

Catalysis depends on residues Glu78, Cys141, and His165.

The protein belongs to the peptidase C15 family. In terms of assembly, homotetramer.

The protein localises to the cytoplasm. It carries out the reaction Release of an N-terminal pyroglutamyl group from a polypeptide, the second amino acid generally not being Pro.. Its function is as follows. Removes 5-oxoproline from various penultimate amino acid residues except L-proline. This Staphylococcus aureus (strain bovine RF122 / ET3-1) protein is Pyrrolidone-carboxylate peptidase.